The sequence spans 189 residues: UPF0301 protein PLES_04031 (189 aa).

It belongs to the UPF0301 (AlgH) family.

The chain is UPF0301 protein PLES_04031 from Pseudomonas aeruginosa (strain LESB58).